We begin with the raw amino-acid sequence, 730 residues long: ABC transporter G family member 20 (730 aa).

Residues 15–244 (ISLKNVCRGY…YESQTLEEVF (230 aa)) form the ABC transporter domain. 47–54 (GASGSGKT) contributes to the ATP binding site. A disordered region spans residues 281-303 (VNNNNNNNNNNNNNNYNNNDDEE). Residues 282 to 298 (NNNNNNNNNNNNNNYNN) show a composition bias toward low complexity. The 229-residue stretch at 489-717 (SFETLAKQQA…FIAVLALNEK (229 aa)) folds into the ABC transmembrane type-2 domain. The next 5 membrane-spanning stretches (helical) occupy residues 520–540 (FIDF…AISI), 572–592 (FLGH…IAIY), 602–622 (IALV…LGLV), 634–654 (IQLS…LWPL), and 692–712 (VWVA…IAVL).

Belongs to the ABC transporter superfamily.

The protein resides in the membrane. This is ABC transporter G family member 20 (abcG20) from Dictyostelium discoideum (Social amoeba).